Here is a 691-residue protein sequence, read N- to C-terminus: Homeobox protein NOBOX (691 aa).

Positions 94 to 103 (ELTRGQKAGE) are enriched in basic and acidic residues. The disordered stretch occupies residues 94–233 (ELTRGQKAGE…NSARATHNPV (140 aa)). The span at 216-228 (PTSSPGAPNSARA) shows a compositional bias: polar residues. Positions 272-363 (RKKTRTLYRS…NRRAKWRKME (92 aa)) form a DNA-binding region, homeobox. 3 disordered regions span residues 366–385 (NGKE…SQCS), 394–437 (VPME…AQRV), and 635–691 (QALG…SHVP). A compositionally biased stretch (pro residues) spans 395–405 (PMEPKPDPFPQ). The span at 420 to 432 (TSDQTLAPTQPSE) shows a compositional bias: polar residues. Residues 679 to 691 (EEARGDDKNSHVP) show a composition bias toward basic and acidic residues.

As to expression, expressed in ovaries, testes and pancreas. Expressed within all stages of the adult female germline, from primordial follicles through to MII oocytes.

The protein localises to the nucleus. Functionally, transcription factor which may play a role in oogenesis. Binds preferentially to the DNA sequences 5'-TAATTG-3', 5'-TAGTTG-3' and 5'-TAATTA-3'. The protein is Homeobox protein NOBOX (NOBOX) of Homo sapiens (Human).